Here is a 37-residue protein sequence, read N- to C-terminus: Large ribosomal subunit protein bL36 (37 aa).

Belongs to the bacterial ribosomal protein bL36 family.

This chain is Large ribosomal subunit protein bL36, found in Deinococcus geothermalis (strain DSM 11300 / CIP 105573 / AG-3a).